A 201-amino-acid chain; its full sequence is GTP cyclohydrolase 1 (201 aa).

Zn(2+) contacts are provided by C90, H93, and C163.

The protein belongs to the GTP cyclohydrolase I family. As to quaternary structure, homomer.

It catalyses the reaction GTP + H2O = 7,8-dihydroneopterin 3'-triphosphate + formate + H(+). It functions in the pathway cofactor biosynthesis; 7,8-dihydroneopterin triphosphate biosynthesis; 7,8-dihydroneopterin triphosphate from GTP: step 1/1. The protein is GTP cyclohydrolase 1 of Streptomyces griseus subsp. griseus (strain JCM 4626 / CBS 651.72 / NBRC 13350 / KCC S-0626 / ISP 5235).